We begin with the raw amino-acid sequence, 220 residues long: Deoxyribose-phosphate aldolase (220 aa).

Asp89 acts as the Proton donor/acceptor in catalysis. Lys151 acts as the Schiff-base intermediate with acetaldehyde in catalysis. The active-site Proton donor/acceptor is the Lys180.

The protein belongs to the DeoC/FbaB aldolase family. DeoC type 1 subfamily.

The protein localises to the cytoplasm. The catalysed reaction is 2-deoxy-D-ribose 5-phosphate = D-glyceraldehyde 3-phosphate + acetaldehyde. It participates in carbohydrate degradation; 2-deoxy-D-ribose 1-phosphate degradation; D-glyceraldehyde 3-phosphate and acetaldehyde from 2-deoxy-alpha-D-ribose 1-phosphate: step 2/2. In terms of biological role, catalyzes a reversible aldol reaction between acetaldehyde and D-glyceraldehyde 3-phosphate to generate 2-deoxy-D-ribose 5-phosphate. The protein is Deoxyribose-phosphate aldolase of Staphylococcus carnosus (strain TM300).